The primary structure comprises 101 residues: Protein Tat (101 aa).

The interaction with human CREBBP stretch occupies residues 1–24 (MEPVDPNLEPWKHPGSQPRTACNN). A transactivation region spans residues 1 to 48 (MEPVDPNLEPWKHPGSQPRTACNNCYCKKCCFHCYACFTRKGLGISYG). 3 residues coordinate Zn(2+): C22, C25, and C27. The cysteine-rich stretch occupies residues 22–37 (CNNCYCKKCCFHCYAC). K28 is subject to N6-acetyllysine; by host PCAF. Zn(2+) contacts are provided by C30, H33, C34, and C37. The tract at residues 38–48 (FTRKGLGISYG) is core. Over residues 48–57 (GRKKRRQRRR) the composition is skewed to basic residues. A disordered region spans residues 48-101 (GRKKRRQRRRAPQDSQTHQASLSKQPASQSRGDPTGPTESKKKVERETETDPFD). Residues 49 to 57 (RKKRRQRRR) carry the Nuclear localization signal, RNA-binding (TAR), and protein transduction motif. Positions 49–86 (RKKRRQRRRAPQDSQTHQASLSKQPASQSRGDPTGPTE) are interaction with the host capping enzyme RNGTT. 2 positions are modified to N6-acetyllysine; by host EP300 and GCN5L2: K50 and K51. 2 positions are modified to asymmetric dimethylarginine; by host PRMT6: R52 and R53. Residues 60 to 79 (QDSQTHQASLSKQPASQSRG) show a composition bias toward polar residues. Residue K71 forms a Glycyl lysine isopeptide (Lys-Gly) (interchain with G-Cter in ubiquitin) linkage. Positions 78–80 (RGD) match the Cell attachment site motif. A compositionally biased stretch (basic and acidic residues) spans 86-101 (ESKKKVERETETDPFD).

It belongs to the lentiviruses Tat family. Interacts with host CCNT1. Associates with the P-TEFb complex composed at least of Tat, P-TEFb (CDK9 and CCNT1), TAR RNA, RNA Pol II. Recruits the HATs CREBBP, TAF1/TFIID, EP300, PCAF and GCN5L2. Interacts with host KAT5/Tip60; this interaction targets the latter to degradation. Interacts with the host deacetylase SIRT1. Interacts with host capping enzyme RNGTT; this interaction stimulates RNGTT. Binds to host KDR, and to the host integrins ITGAV/ITGB3 and ITGA5/ITGB1. Interacts with host KPNB1/importin beta-1 without previous binding to KPNA1/importin alpha-1. Interacts with EIF2AK2. Interacts with host nucleosome assembly protein NAP1L1; this interaction may be required for the transport of Tat within the nucleus, since the two proteins interact at the nuclear rim. Interacts with host C1QBP/SF2P32; this interaction involves lysine-acetylated Tat. Interacts with the host chemokine receptors CCR2, CCR3 and CXCR4. Interacts with host DPP4/CD26; this interaction may trigger an anti-proliferative effect. Interacts with host LDLR. Interacts with the host extracellular matrix metalloproteinase MMP1. Interacts with host PRMT6; this interaction mediates Tat's methylation. Interacts with, and is ubiquitinated by MDM2/Hdm2. Interacts with host PSMC3 and HTATIP2. Interacts with STAB1; this interaction may overcome SATB1-mediated repression of IL2 and IL2RA (interleukin) in T cells by binding to the same domain than HDAC1. Interacts (when acetylated) with human CDK13, thereby increasing HIV-1 mRNA splicing and promoting the production of the doubly spliced HIV-1 protein Nef. Interacts with host TBP; this interaction modulates the activity of transcriptional pre-initiation complex. Interacts with host RELA. Interacts with host PLSCR1; this interaction negatively regulates Tat transactivation activity by altering its subcellular distribution. Asymmetrical arginine methylation by host PRMT6 seems to diminish the transactivation capacity of Tat and affects the interaction with host CCNT1. Post-translationally, acetylation by EP300, CREBBP, GCN5L2/GCN5 and PCAF regulates the transactivation activity of Tat. EP300-mediated acetylation of Lys-50 promotes dissociation of Tat from the TAR RNA through the competitive binding to PCAF's bromodomain. In addition, the non-acetylated Tat's N-terminus can also interact with PCAF. PCAF-mediated acetylation of Lys-28 enhances Tat's binding to CCNT1. Lys-50 is deacetylated by SIRT1. In terms of processing, polyubiquitination by host MDM2 does not target Tat to degradation, but activates its transactivation function and fosters interaction with CCNT1 and TAR RNA. Phosphorylated by EIF2AK2 on serine and threonine residues adjacent to the basic region important for TAR RNA binding and function. Phosphorylation of Tat by EIF2AK2 is dependent on the prior activation of EIF2AK2 by dsRNA.

It localises to the host nucleus. The protein resides in the host nucleolus. Its subcellular location is the host cytoplasm. The protein localises to the secreted. Functionally, transcriptional activator that increases RNA Pol II processivity, thereby increasing the level of full-length viral transcripts. Recognizes a hairpin structure at the 5'-LTR of the nascent viral mRNAs referred to as the transactivation responsive RNA element (TAR) and recruits the cyclin T1-CDK9 complex (P-TEFb complex) that will in turn hyperphosphorylate the RNA polymerase II to allow efficient elongation. The CDK9 component of P-TEFb and other Tat-activated kinases hyperphosphorylate the C-terminus of RNA Pol II that becomes stabilized and much more processive. Other factors such as HTATSF1/Tat-SF1, SUPT5H/SPT5, and HTATIP2 are also important for Tat's function. Besides its effect on RNA Pol II processivity, Tat induces chromatin remodeling of proviral genes by recruiting the histone acetyltransferases (HATs) CREBBP, EP300 and PCAF to the chromatin. This also contributes to the increase in proviral transcription rate, especially when the provirus integrates in transcriptionally silent region of the host genome. To ensure maximal activation of the LTR, Tat mediates nuclear translocation of NF-kappa-B by interacting with host RELA. Through its interaction with host TBP, Tat may also modulate transcription initiation. Tat can reactivate a latently infected cell by penetrating in it and transactivating its LTR promoter. In the cytoplasm, Tat is thought to act as a translational activator of HIV-1 mRNAs. Extracellular circulating Tat can be endocytosed by surrounding uninfected cells via the binding to several surface receptors such as CD26, CXCR4, heparan sulfate proteoglycans (HSPG) or LDLR. Neurons are rarely infected, but they internalize Tat via their LDLR. Through its interaction with nuclear HATs, Tat is potentially able to control the acetylation-dependent cellular gene expression. Modulates the expression of many cellular genes involved in cell survival, proliferation or in coding for cytokines or cytokine receptors. Tat plays a role in T-cell and neurons apoptosis. Tat induced neurotoxicity and apoptosis probably contribute to neuroAIDS. Circulating Tat also acts as a chemokine-like and/or growth factor-like molecule that binds to specific receptors on the surface of the cells, affecting many cellular pathways. In the vascular system, Tat binds to ITGAV/ITGB3 and ITGA5/ITGB1 integrins dimers at the surface of endothelial cells and competes with bFGF for heparin-binding sites, leading to an excess of soluble bFGF. This is Protein Tat from Homo sapiens (Human).